The sequence spans 117 residues: Transcription elongation factor SPT4 (117 aa).

Residues 1–40 (MALETVPKDLRHLRACLLCSLVKTIDQFEYDGCDNCDAYL) form an interaction with SUPT5H region. Residues 16 to 36 (CLLCSLVKTIDQFEYDGCDNC) form a C4-type zinc finger.

It belongs to the SPT4 family. As to quaternary structure, interacts with SUPT5H to form the DSIF complex. DSIF interacts with RNA polymerase II and with the positive transcription elongation factor b complex (P-TEFb complex), which is composed of CDK9 and cyclin-T.

The protein localises to the nucleus. In terms of biological role, may function as a component of the DRB sensitivity-inducing factor complex (DSIF complex), which regulates transcription elongation by RNA polymerase II. Probably enhances transcriptional pausing at sites proximal to the promoter, which may in turn facilitate the assembly of an elongation competent RNA polymerase II complex. The polypeptide is Transcription elongation factor SPT4 (supt4h1) (Xenopus laevis (African clawed frog)).